Reading from the N-terminus, the 315-residue chain is Ribosomal RNA large subunit methyltransferase F (315 aa).

The protein belongs to the methyltransferase superfamily. METTL16/RlmF family.

Its subcellular location is the cytoplasm. The catalysed reaction is adenosine(1618) in 23S rRNA + S-adenosyl-L-methionine = N(6)-methyladenosine(1618) in 23S rRNA + S-adenosyl-L-homocysteine + H(+). Functionally, specifically methylates the adenine in position 1618 of 23S rRNA. The polypeptide is Ribosomal RNA large subunit methyltransferase F (Aeromonas salmonicida (strain A449)).